Consider the following 387-residue polypeptide: Succinate--CoA ligase [ADP-forming] subunit beta (387 aa).

The region spanning 9-244 is the ATP-grasp domain; it reads KRLLAEEGVP…STQQDGREIT (236 aa). ATP contacts are provided by residues lysine 46, 53-55, glutamate 99, serine 102, and glutamate 107; that span reads GRG. 2 residues coordinate Mg(2+): asparagine 199 and aspartate 213. Substrate contacts are provided by residues asparagine 264 and 321–323; that span reads GIT.

It belongs to the succinate/malate CoA ligase beta subunit family. As to quaternary structure, heterotetramer of two alpha and two beta subunits. Mg(2+) serves as cofactor.

The enzyme catalyses succinate + ATP + CoA = succinyl-CoA + ADP + phosphate. It carries out the reaction GTP + succinate + CoA = succinyl-CoA + GDP + phosphate. Its pathway is carbohydrate metabolism; tricarboxylic acid cycle; succinate from succinyl-CoA (ligase route): step 1/1. Functionally, succinyl-CoA synthetase functions in the citric acid cycle (TCA), coupling the hydrolysis of succinyl-CoA to the synthesis of either ATP or GTP and thus represents the only step of substrate-level phosphorylation in the TCA. The beta subunit provides nucleotide specificity of the enzyme and binds the substrate succinate, while the binding sites for coenzyme A and phosphate are found in the alpha subunit. This is Succinate--CoA ligase [ADP-forming] subunit beta from Acidithiobacillus ferrooxidans (strain ATCC 23270 / DSM 14882 / CIP 104768 / NCIMB 8455) (Ferrobacillus ferrooxidans (strain ATCC 23270)).